The sequence spans 397 residues: Protein-glutamate methylesterase/protein-glutamine glutaminase of group 2 operon (397 aa).

Residues 21–139 enclose the Response regulatory domain; it reads RVMIVDDSVV…EASAADTFHH (119 aa). The residue at position 72 (D72) is a 4-aspartylphosphate. Residues 199–388 enclose the CheB-type methylesterase domain; it reads PFSTLAPKVL…LPLNQIGAKV (190 aa). Active-site residues include S213, H241, and D337.

This sequence belongs to the CheB family. Post-translationally, phosphorylated by CheA. Phosphorylation of the N-terminal regulatory domain activates the methylesterase activity.

It is found in the cytoplasm. It carries out the reaction [protein]-L-glutamate 5-O-methyl ester + H2O = L-glutamyl-[protein] + methanol + H(+). The enzyme catalyses L-glutaminyl-[protein] + H2O = L-glutamyl-[protein] + NH4(+). Functionally, involved in chemotaxis. Part of a chemotaxis signal transduction system that modulates chemotaxis in response to various stimuli. Catalyzes the demethylation of specific methylglutamate residues introduced into the chemoreceptors (methyl-accepting chemotaxis proteins or MCP) by CheR. Also mediates the irreversible deamidation of specific glutamine residues to glutamic acid. The chain is Protein-glutamate methylesterase/protein-glutamine glutaminase of group 2 operon from Bradyrhizobium diazoefficiens (strain JCM 10833 / BCRC 13528 / IAM 13628 / NBRC 14792 / USDA 110).